Consider the following 657-residue polypeptide: tRNA 5-methylaminomethyl-2-thiouridine biosynthesis bifunctional protein MnmC (657 aa).

The interval 1-235 (MSDAHNAQLD…KREMLAGPFQ (235 aa)) is tRNA (mnm(5)s(2)U34)-methyltransferase. Positions 261–657 (IGAGLAGCAT…QLIRGTGSPT (397 aa)) are FAD-dependent cmnm(5)s(2)U34 oxidoreductase.

It in the N-terminal section; belongs to the methyltransferase superfamily. tRNA (mnm(5)s(2)U34)-methyltransferase family. In the C-terminal section; belongs to the DAO family. FAD serves as cofactor.

The protein resides in the cytoplasm. It catalyses the reaction 5-aminomethyl-2-thiouridine(34) in tRNA + S-adenosyl-L-methionine = 5-methylaminomethyl-2-thiouridine(34) in tRNA + S-adenosyl-L-homocysteine + H(+). Functionally, catalyzes the last two steps in the biosynthesis of 5-methylaminomethyl-2-thiouridine (mnm(5)s(2)U) at the wobble position (U34) in tRNA. Catalyzes the FAD-dependent demodification of cmnm(5)s(2)U34 to nm(5)s(2)U34, followed by the transfer of a methyl group from S-adenosyl-L-methionine to nm(5)s(2)U34, to form mnm(5)s(2)U34. The protein is tRNA 5-methylaminomethyl-2-thiouridine biosynthesis bifunctional protein MnmC of Ectopseudomonas mendocina (strain ymp) (Pseudomonas mendocina).